The sequence spans 494 residues: Probable cytosol aminopeptidase (494 aa).

The Mn(2+) site is built by Lys-260 and Asp-265. Lys-272 is a catalytic residue. Residues Asp-283, Asp-342, and Glu-344 each coordinate Mn(2+). The active site involves Arg-346.

The protein belongs to the peptidase M17 family. Mn(2+) is required as a cofactor.

The protein localises to the cytoplasm. It carries out the reaction Release of an N-terminal amino acid, Xaa-|-Yaa-, in which Xaa is preferably Leu, but may be other amino acids including Pro although not Arg or Lys, and Yaa may be Pro. Amino acid amides and methyl esters are also readily hydrolyzed, but rates on arylamides are exceedingly low.. The catalysed reaction is Release of an N-terminal amino acid, preferentially leucine, but not glutamic or aspartic acids.. Functionally, presumably involved in the processing and regular turnover of intracellular proteins. Catalyzes the removal of unsubstituted N-terminal amino acids from various peptides. This Bacillus cereus (strain AH187) protein is Probable cytosol aminopeptidase.